A 305-amino-acid chain; its full sequence is tRNA dimethylallyltransferase (305 aa).

11–18 (GPTAVGKT) contacts ATP. 13 to 18 (TAVGKT) contacts substrate. The interval 36-39 (DSMQ) is interaction with substrate tRNA.

Belongs to the IPP transferase family. As to quaternary structure, monomer. Mg(2+) serves as cofactor.

It catalyses the reaction adenosine(37) in tRNA + dimethylallyl diphosphate = N(6)-dimethylallyladenosine(37) in tRNA + diphosphate. Catalyzes the transfer of a dimethylallyl group onto the adenine at position 37 in tRNAs that read codons beginning with uridine, leading to the formation of N6-(dimethylallyl)adenosine (i(6)A). The chain is tRNA dimethylallyltransferase from Listeria monocytogenes serotype 4b (strain CLIP80459).